The sequence spans 514 residues: MYSQQFGTVPREFKGPTPKAVIIRAKPPKAQRAEQHLKRIQRSYHKYHTTLASIKSNEENRLKCDWIQRNNHKTFDSLVQARVQDAMQGFVINTEERRNKLRELLASEENEYFSEMQLKGETIEEKKDKMRERTKLLREKKEKERQEFVAEKLDQQFRERCEELRTKLASIHEKKVVEERNAQIEFNKELKRQKLVEEHLFARLWEEDRLAKERREAQEEKRQRELVQNTRLGLDAQVTSIQAQRQGARRMKEEEARILEQNKAQIKREDEQEKLQKQKRRQETRSSLKKAVQDKIESMQREYREDLDLNMKLVGRALQDLQDEADKKKQKREEMGREQKIYNDYLMQRREEEKAQEKELNRLLEDIKAKKLAEKDRELALQRAARKQLMNEVMNTRKLQVQERLQRKLREQEELALHEQRISESLKVLHQEDMEDFARRCALAEEYRNQLQMQIAHQQQAREAEKEEERQEFEAGLAANKACLDKIQRILSENQALSQNVHPMRRGYPDKPPL.

Coiled coils occupy residues 91-176 and 205-478; these read VINT…EKKV and WEED…AGLA. Disordered regions lie at residues 261–296 and 495–514; these read QNKA…QDKI and QALS…KPPL.

This sequence belongs to the CFAP53 family. In terms of assembly, microtubule inner protein component of sperm flagellar doublet microtubules. Interacts with PIERCE1 and PIERCE2; the interactions link outer dynein arms docking complex (ODA-DC) to the internal microtubule inner proteins (MIP) in cilium axoneme. Interacts with CCDC38. Interacts with CCDC42 and IFT88. Interacts with centriolar satellite proteins PIBF1/CEP90 and PCM1. Interacts with dyneins DNAIC1, DNAIC2 AND DNAH11 and with ODA-DC component ODAD4/TTC25. In terms of tissue distribution, expressed predominantly in testis (at protein level). In embryos at 8 dpc, specifically expressed in the node, in particular within the pit cells that are located at the center of the node and have rotating monocilia on their apical surface. In the adult, expressed in epithelial cells of the trachea, brain ventricles, oviduct and testis.

It is found in the cytoplasm. It localises to the cytoskeleton. The protein resides in the cilium axoneme. The protein localises to the flagellum axoneme. Its subcellular location is the microtubule organizing center. It is found in the centrosome. It localises to the centriolar satellite. The protein resides in the spindle pole. Functionally, microtubule inner protein (MIP) part of the dynein-decorated doublet microtubules (DMTs) in cilia axoneme, which is required for motile cilia beating. Regulates motility patterns of both 9+0 and 9+2 motile cilia through differential localization and recruitment of axonemal dynein components. Required for centriolar satellite integrity and non-motile cilium assembly. Required for motile cilium formation. Through its role in the beating of primary cilia, involved in the establishment of organ laterality during embryogenesis. Required for sperm flagellum biogenesis and is essential for male fertility. This chain is Cilia- and flagella-associated protein 53, found in Mus musculus (Mouse).